A 110-amino-acid chain; its full sequence is MIGGKFNLGSLMKNAKKIQEMMQKAQDELAKIRVTGESGAGMVKLTMTAQHEVVEMNLDDELLKESKEVIEDLIKAALNDANQKILKITQEKMMSAGSLFGGNESDNEET.

Belongs to the YbaB/EbfC family. In terms of assembly, homodimer.

Its subcellular location is the cytoplasm. The protein localises to the nucleoid. Its function is as follows. Binds to DNA and alters its conformation. May be involved in regulation of gene expression, nucleoid organization and DNA protection. The sequence is that of Nucleoid-associated protein CbuK_1603 from Coxiella burnetii (strain CbuK_Q154) (Coxiella burnetii (strain Q154)).